A 402-amino-acid chain; its full sequence is MTEPGTSVSAPVAFPQDRTCPYDPPTAYDPLREGRPLSRVSLYDGRSVWVVTGHAAARALLSDQRLSSDRTLPRFPATTERFEAVRTRRVALLGVDDPEHRTQRRMLVPSFTLKRAAALRPRIQETVDGLLDAMEAQGPPAELVSAFALPLPSMVICALLGVPYADHDFFESQSRRLLRGPGIAEVQDARAQLDDYLYALIDRKRKEPGDGLLDDLIQEQLNRGTVDRAELVSLATLLLIAGHETTANMISLGTFTLLRHPEQLAELRAEPGLMPAAVEELLRFLSIADGLLRVATEDIEVAGTTIRADEGVVFATSVINRDAAGFAEPDALDWHRSARHHVAFGFGIHQCLGQNLARAEMEIALGTLFERLPGLRLAAPADEIPFKPGDTIQGMLELPVTW.

A disordered region spans residues 1–28 (MTEPGTSVSAPVAFPQDRTCPYDPPTAY). A heme-binding site is contributed by Cys351.

Belongs to the cytochrome P450 family. Requires heme as cofactor.

It catalyses the reaction 1-deoxypentalenate + reduced 2[4Fe-4S]-[ferredoxin] + O2 + 2 H(+) = pentalenate + oxidized 2[4Fe-4S]-[ferredoxin] + H2O. It participates in antibiotic biosynthesis; neopentalenolactone biosynthesis. Functionally, catalyzes the conversion of 1-deoxypentalenic acid to pentalenic acid in the biosynthesis of neopentalenolactone antibiotic. The chain is Pentalenic acid synthase (cyp28) from Streptomyces avermitilis (strain ATCC 31267 / DSM 46492 / JCM 5070 / NBRC 14893 / NCIMB 12804 / NRRL 8165 / MA-4680).